Here is a 378-residue protein sequence, read N- to C-terminus: tRNA (guanine(26)-N(2))-dimethyltransferase (378 aa).

Residues 4–374 enclose the Trm1 methyltransferase domain; that stretch reads KEVTEGKVRI…KGYEEIIRCV (371 aa). The S-adenosyl-L-methionine site is built by Arg-44, Arg-69, Asp-87, Asp-114, and Ala-115. Positions 246, 249, 263, and 266 each coordinate Zn(2+).

Belongs to the class I-like SAM-binding methyltransferase superfamily. Trm1 family.

The enzyme catalyses guanosine(26) in tRNA + 2 S-adenosyl-L-methionine = N(2)-dimethylguanosine(26) in tRNA + 2 S-adenosyl-L-homocysteine + 2 H(+). Its function is as follows. Dimethylates a single guanine residue at position 26 of a number of tRNAs using S-adenosyl-L-methionine as donor of the methyl groups. This is tRNA (guanine(26)-N(2))-dimethyltransferase from Saccharolobus islandicus (strain M.16.27) (Sulfolobus islandicus).